The primary structure comprises 565 residues: DNA-binding protein scr1 (565 aa).

A compositionally biased stretch (polar residues) spans 1–19; sequence MSEATTATTTGKPSRSTKN. The disordered stretch occupies residues 1–25; it reads MSEATTATTTGKPSRSTKNPDAPRP. 2 C2H2-type zinc fingers span residues 26–48 and 54–78; these read YKCP…IRTH and HVCT…ARIH. 4 disordered regions span residues 79-119, 261-303, 390-434, and 466-565; these read TNAN…VHMT, SNAP…STGS, RPVS…DDPS, and ASTP…MTKP. A compositionally biased stretch (low complexity) spans 80 to 102; that stretch reads NANSRRNAAAAAAANNSARSSNS. Composition is skewed to polar residues over residues 108-119, 276-286, and 294-303; these read EPSTNNAGVHMT, LPSSSNTSPNH, and GLTSNSSTGS. The span at 391 to 413 shows a compositional bias: low complexity; sequence PVSPCSTAPSSPTFSTRSFSPTP. Residues 466–478 are compositionally biased toward polar residues; that stretch reads ASTPASGAVSRTP. Low complexity-rich tracts occupy residues 479 to 492, 517 to 526, and 537 to 555; these read SSVS…VNSS, FSSSSRVSVS, and SSST…PAFS.

It belongs to the creA/MIG C2H2-type zinc-finger protein family.

Its subcellular location is the nucleus. Functionally, involved in carbon catabolite repression. Represses the transcription of various genes including the inv1 gene. This is DNA-binding protein scr1 (scr1) from Schizosaccharomyces pombe (strain 972 / ATCC 24843) (Fission yeast).